Reading from the N-terminus, the 461-residue chain is MKKGYITQVIGPVVDIRFEGDLPPINNAIKIPMGDRELVVEVAQHIGDNTVRCVAMASTDGLRRGMECIDTGGPIMVPVGKGVLGRMFNVLGQPIDELGEVKDVKYMPIHKKPPSFEEQNPATEILETGIKVIDLLTPYPKGGKIGLFGGAGVGKTVLIMELIRNVAIEHGGYSIFAGVGERSREGNELWLEMHEAGVIDKTAFVFGQMNEPPGARMRVGLAGLTIAEYFRDEEHQDVLLFIDNIFRFVQAGSEVSALLGRMPSAVGYQPTLATEMGALQERITSTKKGSITSVQAIYVPADDLTDPAPATTFAHLDATTVLSRSIAEMGIYPAVDPLDSTSRILEPHIVGEEHYYVARKVQEILQRYKELQDIIAILGMEELTEEDRLIVYRARKIQRFLSQPFFVAEAFTGTPGKYVPLKETIRGFKKIVEGEMDDIPEPAFYMVGTIDEVYEKAEKMK.

149 to 156 (GGAGVGKT) is a binding site for ATP.

This sequence belongs to the ATPase alpha/beta chains family. F-type ATPases have 2 components, CF(1) - the catalytic core - and CF(0) - the membrane proton channel. CF(1) has five subunits: alpha(3), beta(3), gamma(1), delta(1), epsilon(1). CF(0) has three main subunits: a(1), b(2) and c(9-12). The alpha and beta chains form an alternating ring which encloses part of the gamma chain. CF(1) is attached to CF(0) by a central stalk formed by the gamma and epsilon chains, while a peripheral stalk is formed by the delta and b chains.

It is found in the cell membrane. It carries out the reaction ATP + H2O + 4 H(+)(in) = ADP + phosphate + 5 H(+)(out). Produces ATP from ADP in the presence of a proton gradient across the membrane. The catalytic sites are hosted primarily by the beta subunits. The sequence is that of ATP synthase subunit beta from Caldanaerobacter subterraneus subsp. tengcongensis (strain DSM 15242 / JCM 11007 / NBRC 100824 / MB4) (Thermoanaerobacter tengcongensis).